The chain runs to 415 residues: Gamma-glutamyl phosphate reductase (415 aa).

The protein belongs to the gamma-glutamyl phosphate reductase family.

It is found in the cytoplasm. It catalyses the reaction L-glutamate 5-semialdehyde + phosphate + NADP(+) = L-glutamyl 5-phosphate + NADPH + H(+). It functions in the pathway amino-acid biosynthesis; L-proline biosynthesis; L-glutamate 5-semialdehyde from L-glutamate: step 2/2. In terms of biological role, catalyzes the NADPH-dependent reduction of L-glutamate 5-phosphate into L-glutamate 5-semialdehyde and phosphate. The product spontaneously undergoes cyclization to form 1-pyrroline-5-carboxylate. This is Gamma-glutamyl phosphate reductase from Mycolicibacterium gilvum (strain PYR-GCK) (Mycobacterium gilvum (strain PYR-GCK)).